The following is a 712-amino-acid chain: NURS complex subunit red1 (712 aa).

Positions 1–22 are enriched in basic and acidic residues; the sequence is MSRSINLDELRKKALESKKKNE. 3 disordered regions span residues 1–71, 107–195, and 323–348; these read MSRS…DRFP, NKTF…TTNQ, and DDFSNSKIEQSNLEKPPSNSENGLTM. Residues 5-32 are a coiled coil; sequence INLDELRKKALESKKKNEEDESNDSDKE. Acidic residues predominate over residues 23 to 42; the sequence is EDESNDSDKEDGEISEDDPV. The span at 130 to 141 shows a compositional bias: low complexity; that stretch reads SETSDSSNTSQS. 2 stretches are compositionally biased toward polar residues: residues 178 to 193 and 327 to 348; these read FLSTSKNSDANYSKTT and NSKIEQSNLEKPPSNSENGLTM. Residues 351 to 379 adopt a coiled-coil conformation; the sequence is SDYLALLRNKEEEIRRMTKLILRLESNKK. Residues 428 to 447 are disordered; the sequence is PSISSSGASSSAATTNSDTT. A coiled-coil region spans residues 471–501; the sequence is AQIKKSEIDILNNLIEKEEGELTKYQTLVKS. Residues 545–567 show a composition bias toward polar residues; that stretch reads QADENSSQILSSKTSNAPNGTTE. Residues 545–568 are disordered; that stretch reads QADENSSQILSSKTSNAPNGTTET. The C3H1-type zinc finger occupies 618–639; it reads FCKYETTGGVCNDDHCEASHFR.

Interacts with mmi1, pla1 and rrp6.

It localises to the nucleus. In terms of biological role, promotes the exosome-mediated degradation of mRNAs containing a DSR (determinant of selective removal) signal sequence from mitotic cells. The polypeptide is NURS complex subunit red1 (Schizosaccharomyces pombe (strain 972 / ATCC 24843) (Fission yeast)).